The sequence spans 468 residues: N-acetyltransferase SLI1 (468 aa).

Its subcellular location is the endoplasmic reticulum. Its function is as follows. Confers resistance to the sphingolipid biosynthesis inhibitor drug myriocin (ISP-1). Inactivates ISP-1 by converting it into N-acetyl-myriocin. Cooperates with YPK1 in mediating resistance to myriocin. This Saccharomyces cerevisiae (strain ATCC 204508 / S288c) (Baker's yeast) protein is N-acetyltransferase SLI1 (SLI1).